Reading from the N-terminus, the 479-residue chain is Ammonium transporter 3 member 2 (479 aa).

The next 11 helical transmembrane spans lie at 34–54, 59–79, 139–159, 164–184, 202–222, 237–257, 272–292, 297–317, 321–341, 355–375, and 407–427; these read VAAT…YGGV, WAVN…ICWV, VVYF…GSLL, FLAW…VGAF, GGYV…YWVG, ILFT…FNGG, NTNI…VIFF, VVGA…AAGV, WAAL…MMIL, LGVF…TGLF, and IAGG…ICLA.

Belongs to the ammonia transporter channel (TC 1.A.11.2) family.

It is found in the membrane. Functionally, involved in ammonium transport. This is Ammonium transporter 3 member 2 (AMT3-2) from Oryza sativa subsp. japonica (Rice).